Here is a 215-residue protein sequence, read N- to C-terminus: Octanoyltransferase (215 aa).

Residues 31–206 form the BPL/LPL catalytic domain; sequence TDAPDEVWLV…QLVKHLDYAE (176 aa). Residues 70 to 77, 137 to 139, and 150 to 152 each bind substrate; these read RGGQVTYH, SLG, and GLA. Cysteine 168 serves as the catalytic Acyl-thioester intermediate.

This sequence belongs to the LipB family.

It localises to the cytoplasm. The catalysed reaction is octanoyl-[ACP] + L-lysyl-[protein] = N(6)-octanoyl-L-lysyl-[protein] + holo-[ACP] + H(+). Its pathway is protein modification; protein lipoylation via endogenous pathway; protein N(6)-(lipoyl)lysine from octanoyl-[acyl-carrier-protein]: step 1/2. Its function is as follows. Catalyzes the transfer of endogenously produced octanoic acid from octanoyl-acyl-carrier-protein onto the lipoyl domains of lipoate-dependent enzymes. Lipoyl-ACP can also act as a substrate although octanoyl-ACP is likely to be the physiological substrate. The chain is Octanoyltransferase from Pseudomonas fluorescens (strain ATCC BAA-477 / NRRL B-23932 / Pf-5).